We begin with the raw amino-acid sequence, 201 residues long: Recombination protein RecR (201 aa).

The C4-type zinc-finger motif lies at 60-75 (CQICGNIDTRDPCTIC). A Toprim domain is found at 83-178 (TLLVVVETVA…KITRLAHGVP (96 aa)).

The protein belongs to the RecR family.

May play a role in DNA repair. It seems to be involved in an RecBC-independent recombinational process of DNA repair. It may act with RecF and RecO. This chain is Recombination protein RecR, found in Beijerinckia indica subsp. indica (strain ATCC 9039 / DSM 1715 / NCIMB 8712).